The chain runs to 379 residues: Cytochrome b (379 aa).

A run of 4 helical transmembrane segments spans residues 33-53 (FGSL…FLAM), 77-98 (WLIR…FIHV), 113-133 (WNIG…GYVL), and 178-198 (FFAF…VHLL). The heme b site is built by histidine 83 and histidine 97. Histidine 182 and histidine 196 together coordinate heme b. Histidine 201 is a binding site for a ubiquinone. The next 4 membrane-spanning stretches (helical) occupy residues 226–246 (IKDL…ALFF), 288–308 (LGGV…PLLN), 320–340 (ITQT…WIGG), and 347–367 (FTMI…ILMP).

This sequence belongs to the cytochrome b family. In terms of assembly, the cytochrome bc1 complex contains 11 subunits: 3 respiratory subunits (MT-CYB, CYC1 and UQCRFS1), 2 core proteins (UQCRC1 and UQCRC2) and 6 low-molecular weight proteins (UQCRH/QCR6, UQCRB/QCR7, UQCRQ/QCR8, UQCR10/QCR9, UQCR11/QCR10 and a cleavage product of UQCRFS1). This cytochrome bc1 complex then forms a dimer. It depends on heme b as a cofactor.

It localises to the mitochondrion inner membrane. Its function is as follows. Component of the ubiquinol-cytochrome c reductase complex (complex III or cytochrome b-c1 complex) that is part of the mitochondrial respiratory chain. The b-c1 complex mediates electron transfer from ubiquinol to cytochrome c. Contributes to the generation of a proton gradient across the mitochondrial membrane that is then used for ATP synthesis. This is Cytochrome b (MT-CYB) from Akodon dolores (Dolorous grass mouse).